The sequence spans 429 residues: Enolase (429 aa).

Position 162 (Gln-162) interacts with (2R)-2-phosphoglycerate. Residue Glu-204 is the Proton donor of the active site. The Mg(2+) site is built by Asp-241, Glu-283, and Asp-310. Residues Lys-335, Arg-364, Ser-365, and Lys-386 each coordinate (2R)-2-phosphoglycerate. Lys-335 functions as the Proton acceptor in the catalytic mechanism.

The protein belongs to the enolase family. It depends on Mg(2+) as a cofactor.

Its subcellular location is the cytoplasm. The protein resides in the secreted. It localises to the cell surface. The catalysed reaction is (2R)-2-phosphoglycerate = phosphoenolpyruvate + H2O. The protein operates within carbohydrate degradation; glycolysis; pyruvate from D-glyceraldehyde 3-phosphate: step 4/5. Catalyzes the reversible conversion of 2-phosphoglycerate (2-PG) into phosphoenolpyruvate (PEP). It is essential for the degradation of carbohydrates via glycolysis. The chain is Enolase from Mycobacterium avium (strain 104).